A 562-amino-acid chain; its full sequence is Tubby-related protein 2 (562 aa).

The segment at 1 to 81 is disordered; that stretch reads MDREGPRGPR…RRGEERFQSD (81 aa). The segment covering 35–46 has biased composition (basic and acidic residues); that stretch reads QKLEQQRQLFEK. 3 positions are modified to phosphoserine: Ser-152, Ser-153, and Ser-155. The interval 179–294 is disordered; it reads LRRGWLASPG…SNHNAWNMTC (116 aa). Residue Thr-211 is modified to Phosphothreonine. Position 213 is a phosphoserine (Ser-213). Residues 225-240 show a composition bias toward basic and acidic residues; it reads DGDHGDLAPCKVEENT. Residues 285–294 are compositionally biased toward polar residues; the sequence is SNHNAWNMTC.

This sequence belongs to the TUB family. In terms of tissue distribution, expressed in retina and testis.

Its subcellular location is the cytoplasm. It is found in the secreted. The polypeptide is Tubby-related protein 2 (Tulp2) (Mus musculus (Mouse)).